A 124-amino-acid chain; its full sequence is uncharacterized protein (124 aa).

Residues 1-21 form the signal peptide; that stretch reads MFLLSLLHFFHPSLIPSLSLS.

This is an uncharacterized protein from Schizosaccharomyces pombe (strain 972 / ATCC 24843) (Fission yeast).